Consider the following 21-residue polypeptide: VTVYENEGTKVDFDGNLRLLL.

In terms of assembly, disulfide bond interactions within and between MOMP molecules and other components form high molecular-weight oligomers.

The protein localises to the cell outer membrane. Its function is as follows. Structural rigidity of the outer membrane of elementary bodies and porin forming, permitting diffusion of solutes through the intracellular reticulate body membrane. Binds carcinoembryonic antigen (CEA). The polypeptide is Outer membrane protein P2 (Glaesserella parasuis (Haemophilus parasuis)).